Consider the following 234-residue polypeptide: Exotoxin type G (234 aa).

The N-terminal stretch at 1 to 24 (MKTNILTIIILSCVFSYGSQLAYA) is a signal peptide.

Belongs to the staphylococcal/streptococcal toxin family.

In terms of biological role, mitogenic for human peripheral blood lymphocytes. This Streptococcus pyogenes serotype M3 (strain ATCC BAA-595 / MGAS315) protein is Exotoxin type G (speG).